A 610-amino-acid chain; its full sequence is Myoneurin (610 aa).

A BTB domain is found at 24-89 (CDCTIVIGEF…IYTGTLNLDS (66 aa)). A disordered region spans residues 169 to 197 (QGALAKKSSQTKKKKKAFNSPKTGQNKTV). Short sequence motifs (nuclear localization signal) lie at residues 174–190 (KKSS…NSPK) and 257–262 (KRKRGK). The span at 188–197 (SPKTGQNKTV) shows a compositional bias: polar residues. Ser289 is subject to Phosphoserine. 8 C2H2-type zinc fingers span residues 302–324 (PMCN…MRIH), 330–352 (YVCH…VRTH), 358–381 (YKCE…RMHH), 387–409 (YKCD…ARKH), 415–437 (YVCD…VRRH), 443–465 (YVCD…SRKH), 471–493 (YICG…FRSH), and 499–522 (FICE…TKVH). Residues 521–556 (VHSGADKTLDSSAEDHTLSEQDSIQKSPLSETMDVK) form a disordered region. The span at 523–539 (SGADKTLDSSAEDHTLS) shows a compositional bias: basic and acidic residues. A compositionally biased stretch (polar residues) spans 540-550 (EQDSIQKSPLS).

Belongs to the krueppel C2H2-type zinc-finger protein family. In terms of tissue distribution, mainly expressed in the neuromuscular system. Located in and around synaptic myonuclei in adult muscle. Expression is dysregulated after nerve injury. Also found in the testis, ovary and placenta.

It localises to the nucleus. In Homo sapiens (Human), this protein is Myoneurin (MYNN).